The following is a 236-amino-acid chain: Syntaxin-8 (236 aa).

Residues 1–215 (MAPDPWFSTY…LVDRKSTSCG (215 aa)) lie on the Cytoplasmic side of the membrane. A coiled-coil region spans residues 42–65 (VTIRALLQKLKEKIALLKDLLLRA). Residues 145 to 207 (QKIIQEQDAG…RTETRRVNLV (63 aa)) form the t-SNARE coiled-coil homology domain. Serine 160 bears the Phosphoserine mark. A helical; Anchor for type IV membrane protein membrane pass occupies residues 216 to 232 (MIMVILLLLVAIVVVAV). Residues 233–236 (WPTK) lie on the Vesicular side of the membrane.

Belongs to the syntaxin family. Forms a SNARE complex with STX7, VTI1B and VAMP8 which functions in the homotypic fusion of late endosomes. Part of the SNARE core complex containing STX7, VAMP8 and VTI1B. Interacts with VAMP8. Interacts with HECTD3. Interacts with TPC1. Ubiquitinated by HECTD3.

The protein resides in the membrane. Vesicle trafficking protein that functions in the early secretory pathway, possibly by mediating retrograde transport from cis-Golgi membranes to the ER. This chain is Syntaxin-8 (STX8), found in Bos taurus (Bovine).